Reading from the N-terminus, the 388-residue chain is Nuclear hormone receptor family member nhr-16 (388 aa).

Residues 11 to 86 (FLKCAICQES…VGMNPAGVQQ (76 aa)) constitute a DNA-binding region (nuclear receptor). 2 consecutive NR C4-type zinc fingers follow at residues 14-34 (CAICQESAEGFHFGAEACRAC) and 50-74 (CQGNNDCDVTINIRCMCRACRYIKC). One can recognise an NR LBD domain in the interval 115 to 387 (PPSSLMLHIP…DEFYNLMSGR (273 aa)).

It belongs to the nuclear hormone receptor family.

It is found in the nucleus. Functionally, orphan nuclear receptor. This Caenorhabditis elegans protein is Nuclear hormone receptor family member nhr-16 (nhr-16).